The following is a 447-amino-acid chain: Phosphoglucosamine mutase (447 aa).

Ser-102 serves as the catalytic Phosphoserine intermediate. Ser-102, Asp-241, Asp-243, and Asp-245 together coordinate Mg(2+). Ser-102 is modified (phosphoserine).

This sequence belongs to the phosphohexose mutase family. It depends on Mg(2+) as a cofactor. Post-translationally, activated by phosphorylation.

The enzyme catalyses alpha-D-glucosamine 1-phosphate = D-glucosamine 6-phosphate. In terms of biological role, catalyzes the conversion of glucosamine-6-phosphate to glucosamine-1-phosphate. The chain is Phosphoglucosamine mutase from Pseudoalteromonas atlantica (strain T6c / ATCC BAA-1087).